The chain runs to 155 residues: Ribosomal RNA large subunit methyltransferase H (155 aa).

S-adenosyl-L-methionine is bound by residues Leu-72, Gly-103, and Leu-122–Leu-127.

Belongs to the RNA methyltransferase RlmH family. Homodimer.

The protein localises to the cytoplasm. It carries out the reaction pseudouridine(1915) in 23S rRNA + S-adenosyl-L-methionine = N(3)-methylpseudouridine(1915) in 23S rRNA + S-adenosyl-L-homocysteine + H(+). Functionally, specifically methylates the pseudouridine at position 1915 (m3Psi1915) in 23S rRNA. The polypeptide is Ribosomal RNA large subunit methyltransferase H (Haemophilus influenzae (strain PittEE)).